Consider the following 1217-residue polypeptide: CST complex subunit CTC1 (1217 aa).

A disordered region spans residues 328–347 (EADPKPLPMPSNSEDKKDPE).

Belongs to the CTC1 family. In terms of assembly, component of the CST complex, composed of TEN1/C17orf106, CTC1/C17orf68 and STN1; in the complex interacts directly with STN1. Interacts with ACD and POT1.

It is found in the nucleus. Its subcellular location is the chromosome. It localises to the telomere. In terms of biological role, component of the CST complex proposed to act as a specialized replication factor promoting DNA replication under conditions of replication stress or natural replication barriers such as the telomere duplex. The CST complex binds single-stranded DNA with high affinity in a sequence-independent manner, while isolated subunits bind DNA with low affinity by themselves. Initially the CST complex has been proposed to protect telomeres from DNA degradation. However, the CST complex has been shown to be involved in several aspects of telomere replication. The CST complex inhibits telomerase and is involved in telomere length homeostasis; it is proposed to bind to newly telomerase-synthesized 3' overhangs and to terminate telomerase action implicating the association with the ACD:POT1 complex thus interfering with its telomerase stimulation activity. The CST complex is also proposed to be involved in fill-in synthesis of the telomeric C-strand probably implicating recruitment and activation of DNA polymerase alpha. The CST complex facilitates recovery from many forms of exogenous DNA damage; seems to be involved in the re-initiation of DNA replication at repaired forks and/or dormant origins. Involved in telomere maintenance. Involved in genome stability. May be in involved in telomeric C-strand fill-in during late S/G2 phase. The sequence is that of CST complex subunit CTC1 (CTC1) from Homo sapiens (Human).